Consider the following 203-residue polypeptide: NADH-ubiquinone oxidoreductase chain 6 (203 aa).

Transmembrane regions (helical) follow at residues 16–36 (SNIL…TIVS), 40–60 (VVSV…LIMI), 70–90 (LLVY…LINI), 102–122 (YIPL…QKII), and 179–199 (WLII…VISI).

This sequence belongs to the complex I subunit 6 family.

The protein resides in the mitochondrion membrane. The catalysed reaction is a ubiquinone + NADH + 5 H(+)(in) = a ubiquinol + NAD(+) + 4 H(+)(out). Core subunit of the mitochondrial membrane respiratory chain NADH dehydrogenase (Complex I) that is believed to belong to the minimal assembly required for catalysis. Complex I functions in the transfer of electrons from NADH to the respiratory chain. The immediate electron acceptor for the enzyme is believed to be ubiquinone. This is NADH-ubiquinone oxidoreductase chain 6 (ND6) from Trichophyton rubrum (Athlete's foot fungus).